The sequence spans 129 residues: Small ribosomal subunit protein uS12 (129 aa).

Position 89 is a 3-methylthioaspartic acid (aspartate 89).

Belongs to the universal ribosomal protein uS12 family. As to quaternary structure, part of the 30S ribosomal subunit. Contacts proteins S8 and S17. May interact with IF1 in the 30S initiation complex.

In terms of biological role, with S4 and S5 plays an important role in translational accuracy. Interacts with and stabilizes bases of the 16S rRNA that are involved in tRNA selection in the A site and with the mRNA backbone. Located at the interface of the 30S and 50S subunits, it traverses the body of the 30S subunit contacting proteins on the other side and probably holding the rRNA structure together. The combined cluster of proteins S8, S12 and S17 appears to hold together the shoulder and platform of the 30S subunit. The sequence is that of Small ribosomal subunit protein uS12 from Helicobacter hepaticus (strain ATCC 51449 / 3B1).